The sequence spans 147 residues: Large ribosomal subunit protein uL15 (147 aa).

A compositionally biased stretch (basic and acidic residues) spans 1–20 (MTLRLNDLKPADGARTERTR). Residues 1–61 (MTLRLNDLKP…GFEGGQTPMQ (61 aa)) are disordered. A compositionally biased stretch (gly residues) spans 23-33 (RGIGSGLGKTA). The segment covering 34–47 (GRGHKGSFARKGGG) has biased composition (basic residues).

Belongs to the universal ribosomal protein uL15 family. As to quaternary structure, part of the 50S ribosomal subunit.

Binds to the 23S rRNA. The protein is Large ribosomal subunit protein uL15 of Xanthomonas euvesicatoria pv. vesicatoria (strain 85-10) (Xanthomonas campestris pv. vesicatoria).